A 118-amino-acid polypeptide reads, in one-letter code: Mitochondrial protein YPR099C (118 aa).

It localises to the mitochondrion. Its function is as follows. Essential for the functional mitochondria and respiratory growth. This Saccharomyces cerevisiae (strain ATCC 204508 / S288c) (Baker's yeast) protein is Mitochondrial protein YPR099C.